The primary structure comprises 249 residues: MAYSGAQKALKSDKLDEAQALAKSCAGRPDFLPCDGLSICATHSHGKCFKLHWCCYLGWCHCKYVYQPMTNVAQLPSTPVPAAPSDCPDTIDLSISLTERFLRISPCFQAPPCPESPKYCNIAELFIDDYIVKRINGKMCYVQRPQAHVEPAQMNPIQKQHTEDKQIVEETVKGPKMGHCSSPSTSEDSGINALGGHFLESCEEESEEEDELSTDGHSSPGSLWDQDECTLLSPSKSMVEIIENIETTV.

Residues 174-230 (GPKMGHCSSPSTSEDSGINALGGHFLESCEEESEEEDELSTDGHSSPGSLWDQDECT) are disordered. Over residues 201 to 213 (SCEEESEEEDELS) the composition is skewed to acidic residues.

This sequence belongs to the UPF0524 family.

Functionally, plays a role in neuronal and neurobehavioral development. Required for normal expression of the postmitotic and mature neuron markers elavl3 and eno2 and neurobehaviors related to circadian rhythm and altered light-dark conditions. In Danio rerio (Zebrafish), this protein is UPF0524 protein C3orf70 homolog B.